The sequence spans 207 residues: Reticulon-1-A (207 aa).

One can recognise a Reticulon domain in the interval 21–207; it reads AIDLLYWRDI…AKIPGTKQKE (187 aa). Transmembrane regions (helical) follow at residues 35–55 and 139–159; these read IVFG…VVSV and VLMW…LLIM.

As to expression, expressed in the animal hemisphere (presumptive neural ectoderm) of blastula and gastrula stage embryos, and along the anterior neural border, in the panplacodal primordium, and in the dorsolateral side of archenteron roof of late neurula embryos. At the tailbud stage, expression localizes to the central nervous system, including the spinal cord, prosencephalon, mesencephalon and rhombencephalon, as well as the lateral line placode, otic vesicle and pronephros.

The protein localises to the endoplasmic reticulum membrane. Its subcellular location is the nucleus. Functionally, inhibits amyloid precursor protein processing, probably by blocking BACE1 activity. This is Reticulon-1-A (rtn1-a) from Xenopus laevis (African clawed frog).